A 62-amino-acid polypeptide reads, in one-letter code: DNA-directed RNA polymerase subunit Rpo10 (62 aa).

Zn(2+)-binding residues include Cys-6, Cys-9, Cys-43, and Cys-44.

This sequence belongs to the archaeal Rpo10/eukaryotic RPB10 RNA polymerase subunit family. In terms of assembly, part of the RNA polymerase complex. The cofactor is Zn(2+).

The protein resides in the cytoplasm. The enzyme catalyses RNA(n) + a ribonucleoside 5'-triphosphate = RNA(n+1) + diphosphate. Its function is as follows. DNA-dependent RNA polymerase (RNAP) catalyzes the transcription of DNA into RNA using the four ribonucleoside triphosphates as substrates. The polypeptide is DNA-directed RNA polymerase subunit Rpo10 (Methanoregula boonei (strain DSM 21154 / JCM 14090 / 6A8)).